We begin with the raw amino-acid sequence, 170 residues long: Small ribosomal subunit protein uS5 (170 aa).

The S5 DRBM domain occupies 11 to 74 (ILEKLVHINR…ETARRVLIHV (64 aa)).

It belongs to the universal ribosomal protein uS5 family. Part of the 30S ribosomal subunit. Contacts proteins S4 and S8.

In terms of biological role, with S4 and S12 plays an important role in translational accuracy. Functionally, located at the back of the 30S subunit body where it stabilizes the conformation of the head with respect to the body. This chain is Small ribosomal subunit protein uS5, found in Pelagibacter ubique (strain HTCC1062).